Here is a 298-residue protein sequence, read N- to C-terminus: Multifunctional dioxygenase ausE (298 aa).

2 residues coordinate substrate: Arg72 and Gln127. His130 and Asp132 together coordinate Fe cation. Thr167 lines the substrate pocket. His214 serves as a coordination point for Fe cation. Arg226 is a binding site for substrate.

It belongs to the PhyH family. Homodimer. Fe cation serves as cofactor.

The enzyme catalyses preaustinoid A1 + 2-oxoglutarate + O2 = preaustinoid A2 + succinate + CO2 + H2O. It catalyses the reaction preaustinoid A2 + 2-oxoglutarate + O2 = preaustinoid A3 + succinate + CO2 + H2O. It carries out the reaction berkeleyone A + 2-oxoglutarate + O2 = preaustinoid A + succinate + CO2 + H2O. It participates in secondary metabolite biosynthesis; terpenoid biosynthesis. Multifunctional dioxygenase; part of the gene cluster B that mediates the biosynthesis of austinol and dehydroaustinol, two fungal meroterpenoids. The first step of the pathway is the synthesis of 3,5-dimethylorsellinic acid by the polyketide synthase ausA. 3,5-dimethylorsellinic acid is then prenylated by the polyprenyl transferase ausN. Further epoxidation by the FAD-dependent monooxygenase ausM and cyclization by the probable terpene cyclase ausL lead to the formation of protoaustinoid A. Protoaustinoid A is then oxidized to spiro-lactone preaustinoid A3 by the combined action of the FAD-binding monooxygenases ausB and ausC, and the dioxygenase ausE. Acid-catalyzed keto-rearrangement and ring contraction of the tetraketide portion of preaustinoid A3 by ausJ lead to the formation of preaustinoid A4. The aldo-keto reductase ausK, with the help of ausH, is involved in the next step by transforming preaustinoid A4 into isoaustinone which is in turn hydroxylated by the P450 monooxygenase ausI to form austinolide. Finally, the cytochrome P450 monooxygenase ausG modifies austinolide to austinol. Austinol can be further modified to dehydroaustinol which forms a diffusible complex with diorcinol that initiates conidiation. Due to genetic rearrangements of the clusters and the subsequent loss of some enzymes, the end products of the Emericella nidulans austinoid biosynthesis clusters are austinol and dehydroaustinol, even if additional enzymes, such as the O-acetyltransferase ausQ and the cytochrome P450 monooxygenase ausR are still functional. This Emericella nidulans (strain FGSC A4 / ATCC 38163 / CBS 112.46 / NRRL 194 / M139) (Aspergillus nidulans) protein is Multifunctional dioxygenase ausE.